We begin with the raw amino-acid sequence, 207 residues long: Large ribosomal subunit protein bL25 (207 aa).

The protein belongs to the bacterial ribosomal protein bL25 family. CTC subfamily. In terms of assembly, part of the 50S ribosomal subunit; part of the 5S rRNA/L5/L18/L25 subcomplex. Contacts the 5S rRNA. Binds to the 5S rRNA independently of L5 and L18.

Its function is as follows. This is one of the proteins that binds to the 5S RNA in the ribosome where it forms part of the central protuberance. In Azorhizobium caulinodans (strain ATCC 43989 / DSM 5975 / JCM 20966 / LMG 6465 / NBRC 14845 / NCIMB 13405 / ORS 571), this protein is Large ribosomal subunit protein bL25.